The following is a 712-amino-acid chain: Voltage-gated chloride channel TMC4 (712 aa).

The interval 1-39 is disordered; sequence MEENPTLESEAWGSSRGWLAPREARGAPCSSPGPSLSSV. Residues 1–168 lie on the Extracellular side of the membrane; sequence MEENPTLESE…GTESYFSLLR (168 aa). Residue N107 is glycosylated (N-linked (GlcNAc...) asparagine). The helical transmembrane segment at 169–189 threads the bilayer; that stretch reads FLLLLNVLASVLMACMTLLPT. The Cytoplasmic portion of the chain corresponds to 190-249; the sequence is WLGGAPPGPPGPDISSPCGSYNPHSQGLVTFATQLFNLLSGEGYLEWSPLFYGFYPPRPR. Residues 250–270 form a helical membrane-spanning segment; it reads LAVTYLCWAFAVGLICLLLIL. Residues 271–348 lie on the Extracellular side of the membrane; sequence HRSVSGLKQT…GQQARVWLVR (78 aa). The helical transmembrane segment at 349–369 threads the bilayer; sequence VLLNLLVVALLGAAFYGVYWA. Topologically, residues 370–394 are cytoplasmic; the sequence is TGCTVELQEMPLVQELPLLKLGVNY. A helical membrane pass occupies residues 395 to 415; sequence LPSIFIAGVNFVLPPVFKLIA. Over 416–425 the chain is Extracellular; that stretch reads PLEGYTRSRQ. A helical transmembrane segment spans residues 426–446; that stretch reads IVFILLRTVFLRLASLVVLLF. The Cytoplasmic portion of the chain corresponds to 447–483; the sequence is SLWNQITCGGDSEAEDCKTCGYNYKQLPCWETVLGQE. The chain crosses the membrane as a helical span at residues 484–504; the sequence is MYKLLLFDLLTVLAVALLIQF. Over 505–542 the chain is Extracellular; the sequence is PRKLLCGLCPGALGRLAGTQEFQVPDEVLGLIYAQTVV. Residues 543–565 form a helical membrane-spanning segment; it reads WVGSFFCPLLPLLNTVKFLLLFY. The Cytoplasmic segment spans residues 566–592; that stretch reads LKKLTLFSTCSPAARTFRASAANFFFP. The helical transmembrane segment at 593–613 threads the bilayer; that stretch reads LVLLLGLAISSVPLLYSIFLI. At 614 to 654 the chain is on the extracellular side; it reads PPSKLCGPFRGQSSIWAQIPESISSLPETTQNFLFFLGTQA. A helical transmembrane segment spans residues 655–677; that stretch reads FAVPLLLISSILMAYTVALANSY. At 678 to 712 the chain is on the cytoplasmic side; it reads GRLISELKRQRQTEAQNKVFLARRAVALTSTKPAL.

The protein belongs to the TMC family.

The protein localises to the membrane. The catalysed reaction is chloride(in) = chloride(out). In terms of biological role, voltage-gated chloride channel involved in high-concentration salt taste sensation. Depolarization induced by high NaCl concentration may trigger the activation of TMC4-mediated chloride influx into taste bud cells, helping the return to resting potential. Also allows permeation of organic anions including gluconate, but their current amplitudes at positive potentials are less than that of chloride. Involved in pH and temperature-dependent modulation of salty taste. The chain is Voltage-gated chloride channel TMC4 from Homo sapiens (Human).